Consider the following 155-residue polypeptide: Small ribosomal subunit protein uS7c (155 aa).

This sequence belongs to the universal ribosomal protein uS7 family. Part of the 30S ribosomal subunit.

Its subcellular location is the plastid. Its function is as follows. One of the primary rRNA binding proteins, it binds directly to 16S rRNA where it nucleates assembly of the head domain of the 30S subunit. In Aneura mirabilis (Parasitic liverwort), this protein is Small ribosomal subunit protein uS7c (rps7).